The sequence spans 306 residues: Ribonuclease Z (306 aa).

Positions 63, 65, 67, 68, 141, 211, and 269 each coordinate Zn(2+). Catalysis depends on Asp67, which acts as the Proton acceptor.

The protein belongs to the RNase Z family. Homodimer. Zn(2+) is required as a cofactor.

The enzyme catalyses Endonucleolytic cleavage of RNA, removing extra 3' nucleotides from tRNA precursor, generating 3' termini of tRNAs. A 3'-hydroxy group is left at the tRNA terminus and a 5'-phosphoryl group is left at the trailer molecule.. Functionally, zinc phosphodiesterase, which displays some tRNA 3'-processing endonuclease activity. Probably involved in tRNA maturation, by removing a 3'-trailer from precursor tRNA. The sequence is that of Ribonuclease Z from Staphylococcus haemolyticus (strain JCSC1435).